Reading from the N-terminus, the 274-residue chain is Putative phosphoenolpyruvate synthase regulatory protein (274 aa).

Residue 154–161 (GVSRCGKT) coordinates ADP.

It belongs to the pyruvate, phosphate/water dikinase regulatory protein family. PSRP subfamily.

The enzyme catalyses [pyruvate, water dikinase] + ADP = [pyruvate, water dikinase]-phosphate + AMP + H(+). It carries out the reaction [pyruvate, water dikinase]-phosphate + phosphate + H(+) = [pyruvate, water dikinase] + diphosphate. Functionally, bifunctional serine/threonine kinase and phosphorylase involved in the regulation of the phosphoenolpyruvate synthase (PEPS) by catalyzing its phosphorylation/dephosphorylation. The sequence is that of Putative phosphoenolpyruvate synthase regulatory protein from Pseudomonas aeruginosa (strain LESB58).